The sequence spans 109 residues: Protein ripply2 (109 aa).

Polar residues predominate over residues 1–15; the sequence is MENITFTSGLNSEMD. Disordered stretches follow at residues 1–42 and 88–109; these read MENI…RPAD and YEDPDTEDEEDYSDEEDEKELR. A WRPW motif motif is present at residues 20-23; sequence WRPW. Positions 30–42 are enriched in basic and acidic residues; sequence KAPDYKPYKRPAD. The tract at residues 53-88 is ripply homology domain; sequence HPVKLFWPKSQCFDYLYEDAEVLLRNYPVQATICLY. Over residues 89–109 the composition is skewed to acidic residues; that stretch reads EDPDTEDEEDYSDEEDEKELR.

This sequence belongs to the ripply family. First expressed in the paraxial mesoderm at the 90% epiboly stage, and subsequently confined to the presomitic mesoderm. Expressed in the rostral compartment of S-I and S-II.

Its subcellular location is the nucleus. Plays a role in somitogenesis. Required for somite segregation and establishment of rostrocaudal polarity in somites. This chain is Protein ripply2, found in Danio rerio (Zebrafish).